Reading from the N-terminus, the 348-residue chain is D-alanine--D-alanine ligase (348 aa).

Residues 132-334 (KRVLESIGIP…YPDLIEELVT (203 aa)) form the ATP-grasp domain. 162–217 (LARLTFPIFVKPANMGSSVGISKAQTKVELRKAIQLALTYDSRVLIEQGVVAREIE) provides a ligand contact to ATP. Residues Asp288, Glu301, and Asn303 each coordinate Mg(2+).

The protein belongs to the D-alanine--D-alanine ligase family. Mg(2+) serves as cofactor. Requires Mn(2+) as cofactor.

The protein localises to the cytoplasm. It carries out the reaction 2 D-alanine + ATP = D-alanyl-D-alanine + ADP + phosphate + H(+). Its pathway is cell wall biogenesis; peptidoglycan biosynthesis. Its function is as follows. Cell wall formation. The polypeptide is D-alanine--D-alanine ligase (Streptococcus pyogenes serotype M3 (strain SSI-1)).